A 1160-amino-acid polypeptide reads, in one-letter code: DNA polymerase III subunit alpha (1160 aa).

It localises to the cytoplasm. The catalysed reaction is DNA(n) + a 2'-deoxyribonucleoside 5'-triphosphate = DNA(n+1) + diphosphate. DNA polymerase III is a complex, multichain enzyme responsible for most of the replicative synthesis in bacteria. This DNA polymerase also exhibits 3' to 5' exonuclease activity. The alpha chain is the DNA polymerase. In Escherichia coli O6:H1 (strain CFT073 / ATCC 700928 / UPEC), this protein is DNA polymerase III subunit alpha (dnaE).